The primary structure comprises 428 residues: MSKSLQAIRGMNDILPDQSPLWRYFEGTVAGLLDSYGYSQIRTPIVEFTELFKRSIGEVTDIVEKEMYTFQDNKDSLTLRPEGTAACVRAVLEHGIIGNGQVQKLWYVGPMFRHERPQLGRYRQFHQIGVEVFNLAGPDIDAELIMLTWRLWALLGIQDAVTLELNSLGTSEARARYRDALVEFLSQRIDQLDEDSQRRLKSNPLRILDSKNEGTQAALVGAPKLEEYLDEESRVHFEGVKARLDAAGIPFVINTKLVRGLDYYSKTVFEWVTDKLGAQGTVCAGGRYDGLVEQMGGKPTAGVGFAMGIERLLLLIETLGQVPESISRTIDVYLCAFGEQAELAGLKISEQLRDRLPNLRLAVNAGGGNFKNQFKKADKSGALFALILGDDELAKQEIGVKPLRGQGEQQNIAWDALAAHLETAIAQA.

The protein belongs to the class-II aminoacyl-tRNA synthetase family. In terms of assembly, homodimer.

The protein localises to the cytoplasm. The catalysed reaction is tRNA(His) + L-histidine + ATP = L-histidyl-tRNA(His) + AMP + diphosphate + H(+). The protein is Histidine--tRNA ligase of Pseudomonas entomophila (strain L48).